The sequence spans 417 residues: Serine hydroxymethyltransferase (417 aa).

Residues leucine 121 and 125–127 (GHL) contribute to the (6S)-5,6,7,8-tetrahydrofolate site. Lysine 229 carries the N6-(pyridoxal phosphate)lysine modification. Position 355 to 357 (355 to 357 (SPF)) interacts with (6S)-5,6,7,8-tetrahydrofolate.

The protein belongs to the SHMT family. Homodimer. Pyridoxal 5'-phosphate serves as cofactor.

It is found in the cytoplasm. It carries out the reaction (6R)-5,10-methylene-5,6,7,8-tetrahydrofolate + glycine + H2O = (6S)-5,6,7,8-tetrahydrofolate + L-serine. It functions in the pathway one-carbon metabolism; tetrahydrofolate interconversion. The protein operates within amino-acid biosynthesis; glycine biosynthesis; glycine from L-serine: step 1/1. Catalyzes the reversible interconversion of serine and glycine with tetrahydrofolate (THF) serving as the one-carbon carrier. This reaction serves as the major source of one-carbon groups required for the biosynthesis of purines, thymidylate, methionine, and other important biomolecules. Also exhibits THF-independent aldolase activity toward beta-hydroxyamino acids, producing glycine and aldehydes, via a retro-aldol mechanism. This chain is Serine hydroxymethyltransferase, found in Photorhabdus laumondii subsp. laumondii (strain DSM 15139 / CIP 105565 / TT01) (Photorhabdus luminescens subsp. laumondii).